The primary structure comprises 86 residues: Mu-theraphotoxin-Hhn1d (86 aa).

The N-terminal stretch at 1 to 21 is a signal peptide; that stretch reads MKASMFLALAGLALLFVVCYA. The propeptide occupies 22–49; sequence SESEEKEFSNELLSSVLAVDDNSKGEER. Disulfide bonds link C51/C66, C58/C73, and C65/C80. Position 84 is an isoleucine amide (I84).

Belongs to the neurotoxin 10 (Hwtx-1) family. 22 (Htx-4) subfamily. In terms of assembly, monomer. As to expression, expressed by the venom gland.

Its subcellular location is the secreted. In terms of biological role, neurotoxin. Selectively blocks neuronal tetrodotoxin-sensitive voltage-gated sodium channels (Nav). Does not affect tetrodotoxin-resistant voltage-gated sodium channels or calcium channels. The chain is Mu-theraphotoxin-Hhn1d from Cyriopagopus hainanus (Chinese bird spider).